A 760-amino-acid polypeptide reads, in one-letter code: Metal transporter cnnm-2 (760 aa).

The first 21 residues, 1–21 (MIIKVFLRLLLLCAHIVCIDG), serve as a signal peptide directing secretion. Residues 22–153 (KLEIRPVVSG…ETFMPVWAQC (132 aa)) are Extracellular-facing. Residue N88 is glycosylated (N-linked (GlcNAc...) asparagine). Residues 145 to 323 (TFMPVWAQCA…MENDACDIDL (179 aa)) form the CNNM transmembrane domain. Residues 154–174 (AILCLLFSISALCSGLTLGLM) form a helical membrane-spanning segment. Residues 175–208 (ALTPQELSILMKSGSQREKKHAAAIYPIRCHGNR) are Cytoplasmic-facing. A helical membrane pass occupies residues 209–229 (LLCTVIIMNVIVNTGITLLFD). Position 230 (D230) is a topological domain, extracellular. A helical transmembrane segment spans residues 231-251 (LAEGLIAFVASTVGIVVFGEI). Over 252–261 (LPQSICVKYG) the chain is Cytoplasmic. Residues 262-282 (LAVGANTIFITKFFMFLLFPI) traverse the membrane as a helical segment. The Extracellular segment spans residues 283–760 (TWPLGKILDK…SVEELKPLME (478 aa)). 2 N-linked (GlcNAc...) asparagine glycosylation sites follow: N302 and N403. CBS domains follow at residues 344–406 (MTDI…NITV) and 442–512 (MVAK…ITDE). N-linked (GlcNAc...) asparagine glycans are attached at residues N528, N592, and N667. The tract at residues 708–734 (DDFGSPTRKASILDSSPNSRKRSSTSV) is disordered.

The protein belongs to the ACDP family.

It is found in the cell membrane. In terms of biological role, probable metal transporter. Probably acts redundantly with the other metal transport proteins cnnm-1, cnnm-3, cnnm-4 and cnnm-5 to regulate Mg(2+) homeostasis. This Caenorhabditis elegans protein is Metal transporter cnnm-2.